The sequence spans 271 residues: Mannosyl-3-phosphoglycerate phosphatase (271 aa).

Aspartate 13 serves as the catalytic Nucleophile. Residues aspartate 13, aspartate 15, and aspartate 214 each coordinate Mg(2+).

The protein belongs to the HAD-like hydrolase superfamily. MPGP family. It depends on Mg(2+) as a cofactor.

It localises to the cytoplasm. The catalysed reaction is 2-O-(alpha-D-mannosyl)-3-phosphoglycerate + H2O = (2R)-2-O-(alpha-D-mannosyl)-glycerate + phosphate. The protein is Mannosyl-3-phosphoglycerate phosphatase (yedP) of Salmonella choleraesuis (strain SC-B67).